The following is a 508-amino-acid chain: MAMRTPEELSNLIKDLIEQYTPEVKMVDFGIVFQVGDGIARIYGLEKAMSGELLEFEDGTLGIALNLEANNVGAVLLGDGLKITEGSRVRCTGKIAEIPVGEAYLGRVVDGLARPVDGKGAVQTKDSRAIESPAPGIVARRSVYEPLATGLVAVDAMIPVGRGQRELIIGDRQTGKTAIAVDTILNQKGKGVICVYVAIGQKASSVAQVLNTLKERGALDYTIIVMANANEPATLQYLAPYTGATLAEYFMYTGRPTLTIYDDLSKQAQAYREMSLLLRRPPGREAYPGDVFYLHSRLLERAAKLNNALGEGSMTALPIVETQEGDVSAYIPTNVISITDGQIFLAAGLFNSGLRPAINVGISVSRVGSAAQPKAMKQVAGKLKLELAQFAELEAFSQFASDLDQATQNQLARGARLREILKQPQSSPLSVEEQVASLYAGTNGYLDKLEVSQVRAYLSGLRSYLANSYPKYGEILRSTLTFTPEAEGLVKQAINEYLEEFKSQAKAA.

170-177 (GDRQTGKT) lines the ATP pocket.

This sequence belongs to the ATPase alpha/beta chains family. F-type ATPases have 2 components, F(1) - the catalytic core - and F(0) - the membrane proton channel. F(1) has five subunits: alpha(3), beta(3), gamma(1), delta(1), epsilon(1). F(0) has four main subunits: a(1), b(1), b'(1) and c(10-14). The alpha and beta chains form an alternating ring which encloses part of the gamma chain. F(1) is attached to F(0) by a central stalk formed by the gamma and epsilon chains, while a peripheral stalk is formed by the delta, b and b' chains.

Its subcellular location is the plastid. The protein resides in the chloroplast thylakoid membrane. It carries out the reaction ATP + H2O + 4 H(+)(in) = ADP + phosphate + 5 H(+)(out). Functionally, f(1)F(0) ATP synthase produces ATP from ADP in the presence of a proton or sodium gradient. F-type ATPases consist of two structural domains, F(1) containing the extramembraneous catalytic core and F(0) containing the membrane proton channel, linked together by a central stalk and a peripheral stalk. During catalysis, ATP synthesis in the catalytic domain of F(1) is coupled via a rotary mechanism of the central stalk subunits to proton translocation. Its function is as follows. The alpha chain is a regulatory subunit. This chain is ATP synthase subunit alpha, chloroplastic, found in Chlamydomonas reinhardtii (Chlamydomonas smithii).